We begin with the raw amino-acid sequence, 417 residues long: MADIKNYTLNFGPQHPAAHGVLRLVLELDGEVIQRADPHIGLLHRATEKLAEQKTWIQSVPYMDRLDYVSMMVNEHAYVMAIERLLGLEVPIRAQYIRVMFDEITRLLNHLMWIGSHALDVGAMAVFLYAFREREDMFDMYEAVSGARMHAAYYRPGGVYRDLPDTMPQYRASKVHNEKAIKVMNEARSGSLLDFIEDFTNRFPTYVDEYETLLTDNRIWKQRLVDIGVVTPERALQMGFTGPMLRGSGIEWDLRKKQPYEVYDKMDFDIPVGTAGDCYSRYLVRVEEMRQSNRIIKQCIDWLRRNPGPVITENHKVAPPSRVDMKSNMEELIHHFKLFTEGIHVPAGEAYAAVEHPKGEFGIYAISDGANKPYRLKIRAPGFVHLAALDEMARGHMIADAVTIIGTQDIVFGEIDR.

This sequence belongs to the complex I 49 kDa subunit family. NDH-1 is composed of 14 different subunits. Subunits NuoB, C, D, E, F, and G constitute the peripheral sector of the complex.

The protein resides in the cell inner membrane. It carries out the reaction a quinone + NADH + 5 H(+)(in) = a quinol + NAD(+) + 4 H(+)(out). Functionally, NDH-1 shuttles electrons from NADH, via FMN and iron-sulfur (Fe-S) centers, to quinones in the respiratory chain. The immediate electron acceptor for the enzyme in this species is believed to be ubiquinone. Couples the redox reaction to proton translocation (for every two electrons transferred, four hydrogen ions are translocated across the cytoplasmic membrane), and thus conserves the redox energy in a proton gradient. The sequence is that of NADH-quinone oxidoreductase subunit D from Cupriavidus metallidurans (strain ATCC 43123 / DSM 2839 / NBRC 102507 / CH34) (Ralstonia metallidurans).